A 156-amino-acid polypeptide reads, in one-letter code: 6,7-dimethyl-8-ribityllumazine synthase (156 aa).

Residues phenylalanine 24, 56–58 (SFE), and 80–82 (AVV) contribute to the 5-amino-6-(D-ribitylamino)uracil site. Position 85 to 86 (85 to 86 (ET)) interacts with (2S)-2-hydroxy-3-oxobutyl phosphate. Histidine 88 functions as the Proton donor in the catalytic mechanism. A 5-amino-6-(D-ribitylamino)uracil-binding site is contributed by phenylalanine 113. (2S)-2-hydroxy-3-oxobutyl phosphate is bound at residue arginine 127.

It belongs to the DMRL synthase family.

It carries out the reaction (2S)-2-hydroxy-3-oxobutyl phosphate + 5-amino-6-(D-ribitylamino)uracil = 6,7-dimethyl-8-(1-D-ribityl)lumazine + phosphate + 2 H2O + H(+). It participates in cofactor biosynthesis; riboflavin biosynthesis; riboflavin from 2-hydroxy-3-oxobutyl phosphate and 5-amino-6-(D-ribitylamino)uracil: step 1/2. Functionally, catalyzes the formation of 6,7-dimethyl-8-ribityllumazine by condensation of 5-amino-6-(D-ribitylamino)uracil with 3,4-dihydroxy-2-butanone 4-phosphate. This is the penultimate step in the biosynthesis of riboflavin. The sequence is that of 6,7-dimethyl-8-ribityllumazine synthase from Thermococcus kodakarensis (strain ATCC BAA-918 / JCM 12380 / KOD1) (Pyrococcus kodakaraensis (strain KOD1)).